The chain runs to 158 residues: Transcription elongation factor GreA (158 aa).

Residues 10–75 (TKEGKEKLEQ…QMLENMIRNA (66 aa)) adopt a coiled-coil conformation.

The protein belongs to the GreA/GreB family.

Necessary for efficient RNA polymerase transcription elongation past template-encoded arresting sites. The arresting sites in DNA have the property of trapping a certain fraction of elongating RNA polymerases that pass through, resulting in locked ternary complexes. Cleavage of the nascent transcript by cleavage factors such as GreA or GreB allows the resumption of elongation from the new 3'terminus. GreA releases sequences of 2 to 3 nucleotides. In Geobacillus kaustophilus (strain HTA426), this protein is Transcription elongation factor GreA.